The chain runs to 102 residues: MLQLQFFLVVAAILFCIGIYGLIVSRNAIRVLMSIELMLNAVNLNFMAFSNFVDSGLIRGQVFSVFVITVAAAEAAVGLAIVLGIYRNRATIDMESFNLLRW.

Helical transmembrane passes span 4-24 (LQFF…GLIV), 33-53 (MSIE…SNFV), and 65-85 (VFVI…VLGI).

The protein belongs to the complex I subunit 4L family. As to quaternary structure, NDH-1 can be composed of about 15 different subunits; different subcomplexes with different compositions have been identified which probably have different functions.

Its subcellular location is the cellular thylakoid membrane. The enzyme catalyses a plastoquinone + NADH + (n+1) H(+)(in) = a plastoquinol + NAD(+) + n H(+)(out). It carries out the reaction a plastoquinone + NADPH + (n+1) H(+)(in) = a plastoquinol + NADP(+) + n H(+)(out). NDH-1 shuttles electrons from an unknown electron donor, via FMN and iron-sulfur (Fe-S) centers, to quinones in the respiratory and/or the photosynthetic chain. The immediate electron acceptor for the enzyme in this species is believed to be plastoquinone. Couples the redox reaction to proton translocation, and thus conserves the redox energy in a proton gradient. Cyanobacterial NDH-1 also plays a role in inorganic carbon-concentration. In Synechococcus sp. (strain JA-3-3Ab) (Cyanobacteria bacterium Yellowstone A-Prime), this protein is NAD(P)H-quinone oxidoreductase subunit 4L.